The following is a 306-amino-acid chain: Dioxygenase FrzG (306 aa).

Positions 132, 134, and 216 each coordinate Fe cation.

The protein belongs to the PhyH family. As to quaternary structure, homodimer. Fe cation serves as cofactor.

It catalyses the reaction (1S,4S)-4-[(4-methoxyphenyl)methyl]-2-methyl-2,5-diazaspiro[bicyclo[3.2.1]octane-6,1'-cyclohexan]-4'-one + 2-oxoglutarate + O2 = (2S)-3-(4-methoxyphenyl)-2-[(3S)-3-(methylamino)-8-oxo-1-azaspiro[4.5]decan-1-yl]propanal + succinate + CO2. Its pathway is secondary metabolite biosynthesis. Its function is as follows. Dioxygenase; part of the gene cluster that mediates the biosynthesis of the alkaloid (-)-FR901483, a potent immunosuppressant that shows efficacy in animal models and a probable inhibitor of purine nucleotide biosynthesis by targeting phosphoribosylpyrophosphate amidotransferase (PPAT). Within the pathway, FrzG cleaves the C9-N10' bond to yield a conjugated iminium. FrzG is also able to catalyze the dehydrogenation between C7 and C8 which leads to a shunt product. The biosynthesis of (-)-FR901483 starts with the condensation of two L-tyrosines to yield (S,S)-dityrosyl-piperazine. This process occurs in 3 steps with the non-canonical nonribosomal peptide synthetase FrzA catalyzing the reduction of L-tyrosine into L-tyrosinal, the spontaneous condensation of 2 L-tyrosinal units, and the subsequent reduction by the NmrA-like family domain-containing oxidoreductase FrzB. The cytochrome P450 monooxygenase FrzC then performs coupling between N10 and C1' to morph the piperazine into a 1,4-diazabicyclo[3.2.1]octane spiro-fused to a 2,5-cyclohexadienone. The dienone portion is further reduced to cyclohexanone by the flavin-dependent reductase FrzD. The methyltranserases (MTs) FrzE and FrzF are then involved in the methylation at the C10' amine and the C4 phenolic oxygen, respectively. The order of the two MTs appear to be interchangeable. Cleavage of the C9-N10' bond by the dioxygenase FrzG then leads to formation of a conjugated iminium. In addition to the oxidation of C9, an additional dehydrogenation between C7 and C8 can occur to give a likely shunt product. The next biosynthetic step is the intramolecular aldol condensation catalyzed by the newly identified aldolase FrzH to yield an aza-tricyclic product with the formation of a C9-C3' bond. The short-chain dehydrogenase/reductase FrzI then produces dephospho-(-)-FR901483 that is phosphorylated at C4'-OH into (-)-FR901483 by the phosphotransferase FrzJ. This Cladobotryum sp protein is Dioxygenase FrzG.